The following is a 562-amino-acid chain: Dihydroxy-acid dehydratase (562 aa).

Aspartate 78 serves as a coordination point for Mg(2+). A [2Fe-2S] cluster-binding site is contributed by cysteine 119. Residues aspartate 120 and lysine 121 each coordinate Mg(2+). Lysine 121 is subject to N6-carboxylysine. Residue cysteine 192 participates in [2Fe-2S] cluster binding. Glutamate 449 contacts Mg(2+). The active-site Proton acceptor is serine 475.

It belongs to the IlvD/Edd family. Homodimer. [2Fe-2S] cluster serves as cofactor. Mg(2+) is required as a cofactor.

The catalysed reaction is (2R)-2,3-dihydroxy-3-methylbutanoate = 3-methyl-2-oxobutanoate + H2O. The enzyme catalyses (2R,3R)-2,3-dihydroxy-3-methylpentanoate = (S)-3-methyl-2-oxopentanoate + H2O. The protein operates within amino-acid biosynthesis; L-isoleucine biosynthesis; L-isoleucine from 2-oxobutanoate: step 3/4. It functions in the pathway amino-acid biosynthesis; L-valine biosynthesis; L-valine from pyruvate: step 3/4. Its function is as follows. Functions in the biosynthesis of branched-chain amino acids. Catalyzes the dehydration of (2R,3R)-2,3-dihydroxy-3-methylpentanoate (2,3-dihydroxy-3-methylvalerate) into 2-oxo-3-methylpentanoate (2-oxo-3-methylvalerate) and of (2R)-2,3-dihydroxy-3-methylbutanoate (2,3-dihydroxyisovalerate) into 2-oxo-3-methylbutanoate (2-oxoisovalerate), the penultimate precursor to L-isoleucine and L-valine, respectively. The polypeptide is Dihydroxy-acid dehydratase (Aliarcobacter butzleri (strain RM4018) (Arcobacter butzleri)).